Reading from the N-terminus, the 686-residue chain is Protein SDA1 homolog (686 aa).

Ser232, Ser234, and Ser236 each carry phosphoserine. Residues 254–315 adopt a coiled-coil conformation; it reads KKGSKNKKKL…SCKERFEVKM (62 aa). Residues 484–508 form a disordered region; it reads LEKEENTENDEDGWESASLSEEEED. Residues 490–508 are compositionally biased toward acidic residues; the sequence is TENDEDGWESASLSEEEED. Residue Thr551 is modified to Phosphothreonine. The tract at residues 563-586 is disordered; that stretch reads MKKEMDAAPGKAQKRKYLDMDSDE. A phosphoserine mark is found at Ser584, Ser588, and Ser594. A disordered region spans residues 604 to 649; it reads KPKSDKETRLATAMAGRTDRKEFVRKKTKINPFSSSTNKEKKKQKN.

The protein belongs to the SDA1 family.

Its subcellular location is the nucleus. It is found in the nucleolus. Required for 60S pre-ribosomal subunits export to the cytoplasm. This is Protein SDA1 homolog (Sdad1) from Rattus norvegicus (Rat).